A 162-amino-acid chain; its full sequence is Urease accessory protein UreE 1 (162 aa).

A disordered region spans residues 143–162 (SGGHQHHHGHDHDHHHPDHE). Residues 152–162 (HDHDHHHPDHE) show a composition bias toward basic and acidic residues.

This sequence belongs to the UreE family.

The protein localises to the cytoplasm. In terms of biological role, involved in urease metallocenter assembly. Binds nickel. Probably functions as a nickel donor during metallocenter assembly. The chain is Urease accessory protein UreE 1 from Brucella suis biovar 1 (strain 1330).